Here is a 359-residue protein sequence, read N- to C-terminus: Ferredoxin--NADP reductase (359 aa).

Residues Asp-48, Gln-56, Tyr-61, Ala-101, Phe-139, Asp-304, and Ser-345 each coordinate FAD.

The protein belongs to the ferredoxin--NADP reductase type 2 family. Homodimer. FAD is required as a cofactor.

It catalyses the reaction 2 reduced [2Fe-2S]-[ferredoxin] + NADP(+) + H(+) = 2 oxidized [2Fe-2S]-[ferredoxin] + NADPH. This chain is Ferredoxin--NADP reductase, found in Ralstonia pickettii (strain 12J).